An 882-amino-acid chain; its full sequence is Leucine--tRNA ligase (882 aa).

A 'HIGH' region motif is present at residues proline 43–histidine 53. The short motif at lysine 634–serine 638 is the 'KMSKS' region element. Lysine 637 lines the ATP pocket.

Belongs to the class-I aminoacyl-tRNA synthetase family.

It is found in the cytoplasm. The catalysed reaction is tRNA(Leu) + L-leucine + ATP = L-leucyl-tRNA(Leu) + AMP + diphosphate. This is Leucine--tRNA ligase from Rhodopseudomonas palustris (strain BisB18).